Consider the following 1443-residue polypeptide: Sterol 3-beta-glucosyltransferase ATG26 (1443 aa).

The span at 1 to 13 shows a compositional bias: low complexity; it reads MATQADDAAASQA. 2 disordered regions span residues 1-69 and 88-187; these read MATQ…MFMN and NDRF…LTLT. Positions 18–32 are enriched in basic and acidic residues; the sequence is GDLKEHVHDELDKIQ. Over residues 49–58 the composition is skewed to acidic residues; it reads DSEDSDDEDN. The span at 104–117 shows a compositional bias: polar residues; the sequence is QNTRTESIARTSIL. Over residues 125–134 the composition is skewed to basic residues; sequence DKVHRRRKLS. Residues 164-173 show a composition bias toward acidic residues; the sequence is EVADEADDEH. In terms of domain architecture, GRAM 1 spans 240–284; that stretch reads LKEIFEFDEYEQVIEEYPCWLLQSVLLQGYMYITSKHICFYAYLP. A PH domain is found at 289–385; sequence EAVKSGYLSK…WVKSLQRVIF (97 aa). The segment at 463 to 657 is disordered; that stretch reads EQVITGDDHD…HGDRHHGIPH (195 aa). The span at 506 to 525 shows a compositional bias: low complexity; that stretch reads LAPMSPLSPRSPSQLSPRAS. Polar residues predominate over residues 585 to 614; that stretch reads SFLQSSIENPSISTLSPSSYDEPSASQILQ. Residues 631-642 are compositionally biased toward basic residues; sequence SRKRDRSGKRTP. The GRAM 2 domain maps to 765-870; that stretch reads RFRAHFALPE…DCAVTLHQLM (106 aa). Residues 883–910 adopt a coiled-coil conformation; it reads DQEEQDDEEAAAAMAERDELQEARQDEF. Positions 957, 958, 960, 1265, 1267, 1280, 1283, 1284, 1285, 1304, and 1305 each coordinate UDP-alpha-D-glucose. Residues 1385 to 1443 form a disordered region; it reads NAEHGLAEDDDDTEESWTFVGRDEPDPDAVTKKLSDGLAGLGAAGDRPPPLGSQAPTVA. Over residues 1405-1419 the composition is skewed to basic and acidic residues; that stretch reads GRDEPDPDAVTKKLS.

This sequence belongs to the glycosyltransferase 28 family.

The protein resides in the cytoplasm. It localises to the preautophagosomal structure membrane. The enzyme catalyses a sterol + UDP-alpha-D-glucose = a sterol 3-beta-D-glucoside + UDP + H(+). The catalysed reaction is ergosterol + UDP-alpha-D-glucose = ergosteryl 3-beta-D-glucoside + UDP + H(+). Sterol glycosyltransferase responsible for the glycosylation of ergosterol to form ergosterol-glucoside. In Gibberella zeae (strain ATCC MYA-4620 / CBS 123657 / FGSC 9075 / NRRL 31084 / PH-1) (Wheat head blight fungus), this protein is Sterol 3-beta-glucosyltransferase ATG26.